An 86-amino-acid polypeptide reads, in one-letter code: Small ribosomal subunit protein bS20 (86 aa).

The span at Met-1–Val-11 shows a compositional bias: basic residues. Residues Met-1–Arg-20 are disordered.

It belongs to the bacterial ribosomal protein bS20 family.

Binds directly to 16S ribosomal RNA. This is Small ribosomal subunit protein bS20 from Bifidobacterium animalis subsp. lactis (strain AD011).